The following is a 494-amino-acid chain: Protein DETOXIFICATION 21 (494 aa).

Ala-2 carries the N-acetylalanine modification. The next 12 helical transmembrane spans lie at 40 to 60 (LWIV…VSII), 73 to 95 (LAAY…LGMA), 123 to 143 (IVLT…GPIL), 158 to 178 (IIAL…TCQM), 188 to 208 (IIAY…WLLM), 217 to 237 (GAMT…LLFV), 268 to 288 (GGML…TGNL), 297 to 317 (ALAI…GFLA), 340 to 360 (LTAV…FLFL), 384 to 404 (LLAF…VAVG), 416 to 436 (LACY…VVGL), and 441 to 461 (VWIG…VMTL).

Belongs to the multi antimicrobial extrusion (MATE) (TC 2.A.66.1) family.

It is found in the membrane. The chain is Protein DETOXIFICATION 21 from Arabidopsis thaliana (Mouse-ear cress).